A 644-amino-acid polypeptide reads, in one-letter code: DNA gyrase subunit B (644 aa).

Positions 429–543 (CEIFLVEGDS…AGYVYIAQPP (115 aa)) constitute a Toprim domain. Residues E435, D508, and D510 each coordinate Mg(2+).

Belongs to the type II topoisomerase GyrB family. Heterotetramer, composed of two GyrA and two GyrB chains. In the heterotetramer, GyrA contains the active site tyrosine that forms a transient covalent intermediate with DNA, while GyrB binds cofactors and catalyzes ATP hydrolysis. Mg(2+) is required as a cofactor. It depends on Mn(2+) as a cofactor. Ca(2+) serves as cofactor.

The protein resides in the cytoplasm. The catalysed reaction is ATP-dependent breakage, passage and rejoining of double-stranded DNA.. In terms of biological role, a type II topoisomerase that negatively supercoils closed circular double-stranded (ds) DNA in an ATP-dependent manner to modulate DNA topology and maintain chromosomes in an underwound state. Negative supercoiling favors strand separation, and DNA replication, transcription, recombination and repair, all of which involve strand separation. Also able to catalyze the interconversion of other topological isomers of dsDNA rings, including catenanes and knotted rings. Type II topoisomerases break and join 2 DNA strands simultaneously in an ATP-dependent manner. The protein is DNA gyrase subunit B of Staphylococcus aureus (strain MRSA252).